Reading from the N-terminus, the 474-residue chain is Tryptophan biosynthesis protein TrpCF (474 aa).

The tract at residues M1 to P262 is indole-3-glycerol phosphate synthase. The interval N263–Y474 is N-(5'-phosphoribosyl)anthranilate isomerase.

The protein in the N-terminal section; belongs to the TrpC family. It in the C-terminal section; belongs to the TrpF family. In terms of assembly, monomer.

It catalyses the reaction N-(5-phospho-beta-D-ribosyl)anthranilate = 1-(2-carboxyphenylamino)-1-deoxy-D-ribulose 5-phosphate. The enzyme catalyses 1-(2-carboxyphenylamino)-1-deoxy-D-ribulose 5-phosphate + H(+) = (1S,2R)-1-C-(indol-3-yl)glycerol 3-phosphate + CO2 + H2O. Its pathway is amino-acid biosynthesis; L-tryptophan biosynthesis; L-tryptophan from chorismate: step 3/5. It participates in amino-acid biosynthesis; L-tryptophan biosynthesis; L-tryptophan from chorismate: step 4/5. Functionally, bifunctional enzyme that catalyzes two sequential steps of tryptophan biosynthetic pathway. The first reaction is catalyzed by the isomerase, coded by the TrpF domain; the second reaction is catalyzed by the synthase, coded by the TrpC domain. This Corynebacterium glutamicum (strain ATCC 13032 / DSM 20300 / JCM 1318 / BCRC 11384 / CCUG 27702 / LMG 3730 / NBRC 12168 / NCIMB 10025 / NRRL B-2784 / 534) protein is Tryptophan biosynthesis protein TrpCF (trpC).